A 400-amino-acid chain; its full sequence is Tryptophan synthase beta chain (400 aa).

Lys-92 is subject to N6-(pyridoxal phosphate)lysine.

It belongs to the TrpB family. Tetramer of two alpha and two beta chains. Pyridoxal 5'-phosphate is required as a cofactor.

It carries out the reaction (1S,2R)-1-C-(indol-3-yl)glycerol 3-phosphate + L-serine = D-glyceraldehyde 3-phosphate + L-tryptophan + H2O. It functions in the pathway amino-acid biosynthesis; L-tryptophan biosynthesis; L-tryptophan from chorismate: step 5/5. In terms of biological role, the beta subunit is responsible for the synthesis of L-tryptophan from indole and L-serine. This Leptospira borgpetersenii serovar Hardjo-bovis (strain JB197) protein is Tryptophan synthase beta chain.